We begin with the raw amino-acid sequence, 709 residues long: Fatty acid oxidation complex subunit alpha (709 aa).

Residues Met1–Pro188 are enoyl-CoA hydratase. Residues Arg308–Phe709 are 3-hydroxyacyl-CoA dehydrogenase.

This sequence in the N-terminal section; belongs to the enoyl-CoA hydratase/isomerase family. The protein in the central section; belongs to the 3-hydroxyacyl-CoA dehydrogenase family. Heterotetramer of two alpha chains (FadJ) and two beta chains (FadI).

Its subcellular location is the cytoplasm. The enzyme catalyses a (3S)-3-hydroxyacyl-CoA = a (2E)-enoyl-CoA + H2O. It catalyses the reaction a 4-saturated-(3S)-3-hydroxyacyl-CoA = a (3E)-enoyl-CoA + H2O. The catalysed reaction is a (3S)-3-hydroxyacyl-CoA + NAD(+) = a 3-oxoacyl-CoA + NADH + H(+). It carries out the reaction (3S)-3-hydroxybutanoyl-CoA = (3R)-3-hydroxybutanoyl-CoA. It functions in the pathway lipid metabolism; fatty acid beta-oxidation. Functionally, catalyzes the formation of a hydroxyacyl-CoA by addition of water on enoyl-CoA. Also exhibits 3-hydroxyacyl-CoA epimerase and 3-hydroxyacyl-CoA dehydrogenase activities. In Shewanella sp. (strain MR-4), this protein is Fatty acid oxidation complex subunit alpha.